Consider the following 156-residue polypeptide: Small ribosomal subunit protein uS7 (156 aa).

This sequence belongs to the universal ribosomal protein uS7 family. As to quaternary structure, part of the 30S ribosomal subunit. Contacts proteins S9 and S11.

In terms of biological role, one of the primary rRNA binding proteins, it binds directly to 16S rRNA where it nucleates assembly of the head domain of the 30S subunit. Is located at the subunit interface close to the decoding center, probably blocks exit of the E-site tRNA. This Thermoanaerobacter pseudethanolicus (strain ATCC 33223 / 39E) (Clostridium thermohydrosulfuricum) protein is Small ribosomal subunit protein uS7.